Consider the following 430-residue polypeptide: Sphingosine-1-phosphate phosphatase 1 (430 aa).

The segment at 34–100 (GSPKAGEDAE…PRRAGSLRRN (67 aa)) is disordered. S101 carries the post-translational modification Phosphoserine. At T103 the chain carries Phosphothreonine. A run of 4 helical transmembrane segments spans residues 121 to 141 (FCFGTELGNELFYIIFFPFWI), 152 to 172 (LVIIWVLVMYLGQCTKDIIRW), 193 to 213 (MPSTHAMSGTAIPIAMILLTY), and 216 to 236 (WQYPLIYGLILIPCWSSLVCL). The phosphatase sequence motif I stretch occupies residues 167–175 (KDIIRWPRP). The interval 194 to 197 (PSTH) is phosphatase sequence motif II. H197 acts as the Proton donor in catalysis. A phosphatase sequence motif III region spans residues 237–248 (SRIYMGMHSILD). H244 functions as the Nucleophile in the catalytic mechanism. Transmembrane regions (helical) follow at residues 246-266 (ILDVIAGFLYTILILIIFYPL), 279-299 (YAPLIIIGLHLILGIFSFTLD), 311-331 (ILGSGAGIACGSHAAYNLGIS), 348-368 (VTLFGKAILRVVIGMLLVLFV), and 409-429 (YGTVGFSITFLIPYIFSFIGI).

Belongs to the type 2 lipid phosphate phosphatase family.

Its subcellular location is the endoplasmic reticulum membrane. The protein resides in the cell membrane. The enzyme catalyses sphinganine 1-phosphate + H2O = sphinganine + phosphate. The catalysed reaction is sphing-4-enine 1-phosphate + H2O = sphing-4-enine + phosphate. In terms of biological role, specifically dephosphorylates sphingosine 1-phosphate (S1P), dihydro-S1P, and phyto-S1P. Does not act on ceramide 1-phosphate, lysophosphatidic acid or phosphatidic acid. Sphingosine-1-phosphate phosphatase activity is needed for efficient recycling of sphingosine into the sphingolipid synthesis pathway. Regulates the intracellular levels of the bioactive sphingolipid metabolite S1P that regulates diverse biological processes acting both as an extracellular receptor ligand or as an intracellular second messenger. Involved in efficient ceramide synthesis from exogenous sphingoid bases. Converts S1P to sphingosine, which is readily metabolized to ceramide via ceramide synthase. In concert with sphingosine kinase 2 (SphK2), recycles sphingosine into ceramide through a phosphorylation/dephosphorylation cycle. Regulates endoplasmic-to-Golgi trafficking of ceramides, resulting in the regulation of ceramide levels in the endoplasmic reticulum, preferentially long-chain ceramide species, and influences the anterograde membrane transport of both ceramide and proteins from the endoplasmic reticulum to the Golgi apparatus. The modulation of intracellular ceramide levels in turn regulates apoptosis. Via S1P levels, modulates resting tone, intracellular Ca(2+) and myogenic vasoconstriction in resistance arteries. Also involved in unfolded protein response (UPR) and ER stress-induced autophagy via regulation of intracellular S1P levels. Involved in the regulation of epidermal homeostasis and keratinocyte differentiation. This is Sphingosine-1-phosphate phosphatase 1 from Rattus norvegicus (Rat).